The sequence spans 283 residues: Thymidylate synthase (283 aa).

Residues Arg31 and 145–146 (RR) each bind dUMP. Residue Cys165 is the Nucleophile of the active site. DUMP contacts are provided by residues 185–188 (RSAD), Asn196, and 226–228 (HIY). (6R)-5,10-methylene-5,6,7,8-tetrahydrofolate is bound at residue Asp188. Position 282 (Ser282) interacts with (6R)-5,10-methylene-5,6,7,8-tetrahydrofolate.

The protein belongs to the thymidylate synthase family. Bacterial-type ThyA subfamily. In terms of assembly, homodimer.

The protein resides in the cytoplasm. The catalysed reaction is dUMP + (6R)-5,10-methylene-5,6,7,8-tetrahydrofolate = 7,8-dihydrofolate + dTMP. The protein operates within pyrimidine metabolism; dTTP biosynthesis. Catalyzes the reductive methylation of 2'-deoxyuridine-5'-monophosphate (dUMP) to 2'-deoxythymidine-5'-monophosphate (dTMP) while utilizing 5,10-methylenetetrahydrofolate (mTHF) as the methyl donor and reductant in the reaction, yielding dihydrofolate (DHF) as a by-product. This enzymatic reaction provides an intracellular de novo source of dTMP, an essential precursor for DNA biosynthesis. The protein is Thymidylate synthase of Symbiobacterium thermophilum (strain DSM 24528 / JCM 14929 / IAM 14863 / T).